Here is a 152-residue protein sequence, read N- to C-terminus: Nucleoside diphosphate kinase B (152 aa).

The tract at residues 1-66 (MANLERTFIA…DRPFFPGLVK (66 aa)) is interaction with AKAP13. The ATP site is built by Lys-12, Phe-60, Arg-88, Thr-94, Arg-105, and Asn-115. The active-site Pros-phosphohistidine intermediate is His-118.

It belongs to the NDK family. As to quaternary structure, hexamer of two different chains: An and B (A6, A5B, A4B2, A3B3, A2B4, AB5, B6). Interacts with CAPN8. Interacts with AKAP13. Interacts with ITGB1BP1 (via C-terminal domain region). Interacts with BCL2L10. Mg(2+) serves as cofactor. In terms of tissue distribution, expressed in the base region of the oxyntic and pyloric mucosae.

It localises to the cytoplasm. It is found in the cell projection. The protein resides in the lamellipodium. The protein localises to the ruffle. Its subcellular location is the nucleus. The catalysed reaction is a 2'-deoxyribonucleoside 5'-diphosphate + ATP = a 2'-deoxyribonucleoside 5'-triphosphate + ADP. The enzyme catalyses a ribonucleoside 5'-diphosphate + ATP = a ribonucleoside 5'-triphosphate + ADP. It carries out the reaction ATP + protein L-histidine = ADP + protein N-phospho-L-histidine.. Major role in the synthesis of nucleoside triphosphates other than ATP. The ATP gamma phosphate is transferred to the NDP beta phosphate via a ping-pong mechanism, using a phosphorylated active-site intermediate. Negatively regulates Rho activity by interacting with AKAP13/LBC. Acts as a transcriptional activator of the MYC gene; binds DNA non-specifically. Binds to both single-stranded guanine- and cytosine-rich strands within the nuclease hypersensitive element (NHE) III(1) region of the MYC gene promoter. Does not bind to duplex NHE III(1). Has G-quadruplex (G4) DNA-binding activity, which is independent of its nucleotide-binding and kinase activity. Binds both folded and unfolded G4 with similar low nanomolar affinities. Stabilizes folded G4s regardless of whether they are prefolded or not. Exhibits histidine protein kinase activity. This chain is Nucleoside diphosphate kinase B (Nme2), found in Mus musculus (Mouse).